Reading from the N-terminus, the 151-residue chain is Flavodoxin YqcA (151 aa).

Residues 4 to 145 enclose the Flavodoxin-like domain; sequence IGIFVGTVYG…ISCPWVEAWA (142 aa). Residues 10–15 and 99–101 contribute to the FMN site; these read TVYGNA and NFC.

This sequence belongs to the flavodoxin family. MioC subfamily. Monomer. Requires FMN as cofactor.

Probable electron transporter. This is Flavodoxin YqcA from Pectobacterium carotovorum subsp. carotovorum (Erwinia carotovora subsp. carotovora).